Consider the following 211-residue polypeptide: Ubiquitin-conjugating enzyme E2 S (211 aa).

Residues 11-157 (HVIRQVYKEV…ARLMTEIHAH (147 aa)) form the UBC core domain. Cys-95 (glycyl thioester intermediate) is an active-site residue. Basic and acidic residues predominate over residues 157-167 (HSSSLRGKDPT). The segment at 157-211 (HSSSLRGKDPTDPCSSASVTGALGDGPMAKKHAGDRDKKLAAKKKTDKKRALRRL) is disordered. A compositionally biased stretch (basic residues) spans 197–211 (AAKKKTDKKRALRRL).

The protein belongs to the ubiquitin-conjugating enzyme family.

It catalyses the reaction S-ubiquitinyl-[E1 ubiquitin-activating enzyme]-L-cysteine + [E2 ubiquitin-conjugating enzyme]-L-cysteine = [E1 ubiquitin-activating enzyme]-L-cysteine + S-ubiquitinyl-[E2 ubiquitin-conjugating enzyme]-L-cysteine.. The protein operates within protein modification; protein ubiquitination. Its function is as follows. Catalyzes the covalent attachment of ubiquitin to other proteins. Acts as an essential factor of the anaphase promoting complex/cyclosome (APC/C), a cell cycle-regulated ubiquitin ligase that controls progression through mitosis. Acts by specifically elongating 'Lys-11'-linked polyubiquitin chains initiated by the E2 enzyme ube2c/ubch10 on APC/C substrates, enhancing the degradation of APC/C substrates by the proteasome and promoting mitotic exit. This Aquarana catesbeiana (American bullfrog) protein is Ubiquitin-conjugating enzyme E2 S (ube2s).